The chain runs to 300 residues: Bifunctional protein FolD (300 aa).

Residues 168 to 170 (GRS), Ser-193, and Ile-234 contribute to the NADP(+) site.

Belongs to the tetrahydrofolate dehydrogenase/cyclohydrolase family. Homodimer.

The catalysed reaction is (6R)-5,10-methylene-5,6,7,8-tetrahydrofolate + NADP(+) = (6R)-5,10-methenyltetrahydrofolate + NADPH. It carries out the reaction (6R)-5,10-methenyltetrahydrofolate + H2O = (6R)-10-formyltetrahydrofolate + H(+). It functions in the pathway one-carbon metabolism; tetrahydrofolate interconversion. Catalyzes the oxidation of 5,10-methylenetetrahydrofolate to 5,10-methenyltetrahydrofolate and then the hydrolysis of 5,10-methenyltetrahydrofolate to 10-formyltetrahydrofolate. This is Bifunctional protein FolD from Ehrlichia ruminantium (strain Gardel).